The following is a 29-amino-acid chain: Beta-theraphotoxin-Gr1b (29 aa).

3 disulfide bridges follow: C2-C16, C9-C21, and C15-C25. L29 bears the Leucine amide mark.

Belongs to the neurotoxin 30 (phrixotoxin) family. Expressed by the venom gland.

The protein resides in the secreted. In terms of biological role, inhibits the voltage-gated sodium channels Nav1.1/SCN1A (IC(50)=360 nM), Nav1.2/SCN2A (IC(50)=600 nM), Nav1.3/SCN3A (IC(50)=1280), Nav1.4/SCN4A (IC(50)=330 nM), Nav1.6/SCN8A (IC(50)=1200 nM), Nav1.7/SCN9A (IC(50)=1-40 nM), and voltage-gated potassium channels Kv11.1/KCNH2 (IC(50)=4.8 uM). Induces analgesia in mammals. This analgesia is mediated by a non-opioid receptor related mechanism. This Grammostola rosea (Chilean rose tarantula) protein is Beta-theraphotoxin-Gr1b.